The primary structure comprises 337 residues: MSRKYFEEEVIQQTLDYNYAQHSDADKFNIAYGIDKNFLFGCGVSIASVLLANPEKALAFHVFTDFFDSEDQQRFEALAKQYATQIVVYLIDCERLKSLPSTKNWTYATYFRFIIADYFSDKTDRVLYLDADIACKGSIQELIDLNFAENEIAAVVAEGELEWWTKRSVSLATPGLVSGYFNAGFILINIPLWTAENISKKAIEMLKDPEVVQRITHLDQDVLNIFLVNKARFVDKKFNTQFSLNYELKDSVINPVDAETVFVHYIGPTKPWHSWGAYPVSQYFLQAKSNSPWSHCALLNPVTSHQLRYAAKHMFNQKHYTSGINYYIAYFKRKLLE.

UDP is bound by residues 33–38 (GIDKNF) and 130–131 (DA). The Mg(2+) site is built by D130 and D132. Short sequence motifs (DXD) lie at residues 130-132 (DAD) and 219-221 (DQD). Residue H264 coordinates Mg(2+). Residue 264 to 270 (HYIGPTK) participates in UDP binding.

This sequence belongs to the glycosyltransferase 8 family. The cofactor is Mg(2+).

The catalysed reaction is UDP-alpha-D-galactose + [lipopolysaccharide] = UDP + 3-alpha-D-galactosyl-[lipopolysaccharide].. It functions in the pathway bacterial outer membrane biogenesis; LPS core biosynthesis. With respect to regulation, inhibited in a competitive manner by closely related nonsubstrate lipopolysaccharides. Galactosyltransferase involved in the biosynthesis of the core oligosaccharide region of lipopolysaccharide (LPS). Catalyzes the addition of an alpha l,3-linked galactose (galactose I) to the first outer-core glucose (glucose I). Cannot use UDP-glucose. Activity probably does not require the branched galactose added by WaaB, but it is higher in the presence of this branched galactose. The protein is Lipopolysaccharide 1,3-galactosyltransferase of Salmonella typhimurium (strain LT2 / SGSC1412 / ATCC 700720).